A 154-amino-acid polypeptide reads, in one-letter code: Large ribosomal subunit protein uL13 (154 aa).

The protein belongs to the universal ribosomal protein uL13 family. As to quaternary structure, part of the 50S ribosomal subunit.

Functionally, this protein is one of the early assembly proteins of the 50S ribosomal subunit, although it is not seen to bind rRNA by itself. It is important during the early stages of 50S assembly. This Rhodopseudomonas palustris (strain BisB18) protein is Large ribosomal subunit protein uL13.